Consider the following 154-residue polypeptide: Ribonuclease HI (154 aa).

Residues 1–142 (MQKQIEIFTD…CDQLAKAGAE (142 aa)) form the RNase H type-1 domain. The Mg(2+) site is built by Asp-10, Glu-48, Asp-70, and Asp-134.

The protein belongs to the RNase H family. Monomer. It depends on Mg(2+) as a cofactor.

It localises to the cytoplasm. It carries out the reaction Endonucleolytic cleavage to 5'-phosphomonoester.. Endonuclease that specifically degrades the RNA of RNA-DNA hybrids. This Pasteurella multocida (strain Pm70) protein is Ribonuclease HI (rnhA).